Reading from the N-terminus, the 354-residue chain is Photosystem II D2 protein (354 aa).

Position 2 is an N-acetylthreonine (threonine 2). Threonine 2 carries the phosphothreonine modification. The helical transmembrane segment at 42 to 62 (CAYFALGGWFTGTTFVTSWYT) threads the bilayer. Histidine 119 provides a ligand contact to chlorophyll a. A helical transmembrane segment spans residues 126-142 (GFMLRQFELARSVQLRP). Pheophytin a-binding residues include glutamine 131 and asparagine 144. Residues 154–167 (VFVSVFLIYPLGQS) form a helical membrane-spanning segment. Histidine 199 provides a ligand contact to chlorophyll a. The helical transmembrane segment at 209–229 (AALLCAIHGATVENTLFEDGD) threads the bilayer. Residues histidine 216 and phenylalanine 263 each contribute to the a plastoquinone site. Histidine 216 serves as a coordination point for Fe cation. Histidine 270 serves as a coordination point for Fe cation. The chain crosses the membrane as a helical span at residues 280 to 296 (GLWMSALGVVGLALNLR).

It belongs to the reaction center PufL/M/PsbA/D family. As to quaternary structure, PSII is composed of 1 copy each of membrane proteins PsbA, PsbB, PsbC, PsbD, PsbE, PsbF, PsbH, PsbI, PsbJ, PsbK, PsbL, PsbM, PsbT, PsbX, PsbY, PsbZ, Psb30/Ycf12, at least 3 peripheral proteins of the oxygen-evolving complex and a large number of cofactors. It forms dimeric complexes. The D1/D2 heterodimer binds P680, chlorophylls that are the primary electron donor of PSII, and subsequent electron acceptors. It shares a non-heme iron and each subunit binds pheophytin, quinone, additional chlorophylls, carotenoids and lipids. There is also a Cl(-1) ion associated with D1 and D2, which is required for oxygen evolution. The PSII complex binds additional chlorophylls, carotenoids and specific lipids. is required as a cofactor.

The protein localises to the plastid. Its subcellular location is the chloroplast thylakoid membrane. The enzyme catalyses 2 a plastoquinone + 4 hnu + 2 H2O = 2 a plastoquinol + O2. Functionally, photosystem II (PSII) is a light-driven water:plastoquinone oxidoreductase that uses light energy to abstract electrons from H(2)O, generating O(2) and a proton gradient subsequently used for ATP formation. It consists of a core antenna complex that captures photons, and an electron transfer chain that converts photonic excitation into a charge separation. The D1/D2 (PsbA/PsbD) reaction center heterodimer binds P680, the primary electron donor of PSII as well as several subsequent electron acceptors. D2 is needed for assembly of a stable PSII complex. The protein is Photosystem II D2 protein of Piper cenocladum (Ant piper).